Reading from the N-terminus, the 330-residue chain is Olfactory receptor 11H6 (330 aa).

Topologically, residues 1-43 (MFFIIHSLVTSVFLTALGPQNRTMHFVTEFVLLGFHGQREMQS) are extracellular. N-linked (GlcNAc...) asparagine glycosylation occurs at Asn-21. The helical transmembrane segment at 44 to 64 (CFFSFILVLYLLTLLGNGAIV) threads the bilayer. The Cytoplasmic portion of the chain corresponds to 65–72 (CAVKLDRR). A helical membrane pass occupies residues 73-93 (LHTPMYILLGNFAFLEIWYIS). The Extracellular segment spans residues 94-117 (STVPNMLVNILSEIKTISFSGCFL). Cys-115 and Cys-207 are joined by a disulfide. A helical membrane pass occupies residues 118–138 (QFYFFFSLGTTECFFLSVMAY). Residues 139–157 (DRYLAICRPLHYPSIMTGK) lie on the Cytoplasmic side of the membrane. The helical transmembrane segment at 158-178 (FCIILVCVCWVGGFLCYPVPI) threads the bilayer. The Extracellular segment spans residues 179–215 (VLISQLPFCGPNIIDHLVCDPGPLFALACISAPSTEL). A helical transmembrane segment spans residues 216-235 (ICYTFNSMIIFGPFLSILGS). Residues 236–255 (YTLVIRAVLCIPSGAGRTKA) lie on the Cytoplasmic side of the membrane. A helical transmembrane segment spans residues 256 to 276 (FSTCGSHLMVVSLFYGTLMVM). The Extracellular segment spans residues 277–289 (YVSPTSGNPAGMQ). A helical transmembrane segment spans residues 290–310 (KIITLVYTAMTPFLNPLIYSL). The Cytoplasmic portion of the chain corresponds to 311–330 (RNKDMKDALKRVLGLTVSQN).

This sequence belongs to the G-protein coupled receptor 1 family.

The protein localises to the cell membrane. Functionally, odorant receptor. The polypeptide is Olfactory receptor 11H6 (OR11H6) (Homo sapiens (Human)).